The following is a 286-amino-acid chain: Aquaporin PIP1-1 (286 aa).

Residues 1-34 are disordered; that stretch reads MEGKEEDVRLGANKFSERQPIGTAAQSDKGYKEP. Topologically, residues 1-54 are cytoplasmic; that stretch reads MEGKEEDVRLGANKFSERQPIGTAAQSDKGYKEPPPAPLFEPGELTSWSFYRAG. Residues 55 to 75 form a helical membrane-spanning segment; that stretch reads IAEFMATFLFLYITILTVMGV. At 76–88 the chain is on the extracellular side; that stretch reads VKSNSKCSTVGIQ. Residues 89–109 form a helical membrane-spanning segment; sequence GIAWAFGGMIFALVYCTAGIS. The Cytoplasmic portion of the chain corresponds to 110–131; that stretch reads GGHINPAVTFGLFLARKLSLTR. An NPA 1 motif is present at residues 114-116; sequence NPA. A helical membrane pass occupies residues 132–152; that stretch reads ALFYMVMQCLGAICGAGVVKG. Residues 153–174 lie on the Extracellular side of the membrane; sequence YQKGLYESNGGGANVVAPGYTK. Residues 175–195 traverse the membrane as a helical segment; that stretch reads GDGLGAEIVGTFILVYTVFSA. At 196 to 208 the chain is on the cytoplasmic side; that stretch reads TDAKRNARDSHVP. Residues 209-229 traverse the membrane as a helical segment; that stretch reads ILAPLPIGFAVFLVHLATIPI. Residues 230–256 are Extracellular-facing; sequence TGTGINPARSLGAAIIYNKKHAWDDHW. The NPA 2 motif lies at 235–237; the sequence is NPA. Residues 257–277 form a helical membrane-spanning segment; it reads IFWVGPFIGAALAAIYHQIVI. At 278–286 the chain is on the cytoplasmic side; that stretch reads RAIPFKSRP.

It belongs to the MIP/aquaporin (TC 1.A.8) family. PIP (TC 1.A.8.11) subfamily. In terms of tissue distribution, expressed in leaves, roots, stems, flowers and fruits, with highest levels in roots.

It localises to the cell membrane. Functionally, water channel required to facilitate the transport of water across cell membrane; mercury-insensitive. Promotes primary root elongation and root hair formation. Contributes to the tolerance to multiple abiotic stresses including salt (NaCl), cold and water deprivation, by modulating cytosolic K(+)/Na(+) ratio, maintaining osmotic balance, and reducing membrane injury (e.g. oxidative injury). Also regulates the expression of abscisic acid (ABA)-responsive genes during dehydration and salt stresses. The chain is Aquaporin PIP1-1 from Musa acuminata (Banana).